The following is a 366-amino-acid chain: Leucine dehydrogenase (366 aa).

Residue K82 is part of the active site. 182–188 (GVGNVAY) is an NAD(+) binding site.

The protein belongs to the Glu/Leu/Phe/Val dehydrogenases family.

It carries out the reaction L-leucine + NAD(+) + H2O = 4-methyl-2-oxopentanoate + NH4(+) + NADH + H(+). Its pathway is amino-acid degradation; L-leucine degradation; 4-methyl-2-oxopentanoate from L-leucine (dehydrogenase route): step 1/1. Catalyzes the reversible deamination of L-leucine to 4-methyl-2-oxopentanoate. This is Leucine dehydrogenase (ldh) from Bacillus cereus.